We begin with the raw amino-acid sequence, 1663 residues long: MKNIFKDKNIYILSVENDQRDKCKSYLISKKALVEKRFSKKVNIIITSEKTILENKFPVNTATKLGIEIIDYETLSRDIERFIRKTQPTSSNGSTSTTTTTTTTTQKGQIVSFKPTSSTSTTTNVINTTTTSTTSTTTIVDPIISLIVPPSGSNNGSFQIAIFGIGFLAGAGFRIKIGNDNGGGGVFASNYEFHSSTSVLCTIPNLNIKCGQQPIYASNDGGKTFGFPIQFLFFDTSIHRIPTAREQDGMVLKSQLDNLKRAISNIQTMESILMRRISLLNGNHDDSKSIEQIFIQQQNFIESGASQLLLGNGGTTDQLLQSLEGSEYSSTNDDGENDQSDDDDDNEDDDDFVEKNSNQVKEEFSEREIKIFISSPFKDMQLDRDQIVKVVIPRIRKLCIERDIVLSYVDLRWGVTSNQSEQSTGLSMCLKELEKCNILIGLFGERYGWSSQEKQDPKSQQLLQSTLDRAIQDFPWVKNYRDSSITEIEFRMLLNQRQQQRNGFFYFRDPYYLEEVSQMDKNNFVSEGQRSKEKLEKLKQEIIKSPFKSSEYRRPTNLSDVLYEDLEKYIDKKYPSGNCELKGFEKERFLHSVFIKNLTKIYITNENYFMEIDTYLSGSATSSGSGNKSISIGSSINSGLLSSLKNKPVFLIQGESGSGKSSLISNWLKQHKEQHPEDLVVSHWIGASPSSNKFTSILIRIMNEIKNQIEIDQKIANGGSNSSSSSSSSMFSTTSTSSVSWLPEIPDETFESEKIVSEFPQFLQYVMSHPSLNGKRLVLLIDGLDKLDPRENSQELIWFPRNFPHNVKVIVSSIQGSRQSEVLKKRGSHILSILPFTEAERKSMVRLYLQKYAKKLSDQQEIAIAISKSTTNPRFLQLLLDDILVFGDYERLNDRIKTLLRAKNTSELYEIILDRIEKDYDPKAKGLVSEFLKYIWAGRRGVEMSMLSTLLLKKNIDPAEWGSLLVLMEAYITSSSGVISFLNDDISKAVEKKYITTPKIGIEIHTNLAEAFEQSGDLNERKVEEYPYQLLKSENWESLKNTLTNLYVFDKLYTPNHKVDLINYWNVLEKQTKPPKNAAERDDPIPYNCSNEFKAIISRSFIQASGLVISDVWFRVASFLEELSQFDGAEVLYNKCRELYINNSQNIEAAKVDRAMGRMYLTMGQNDKSDSKFRLALSIYTKERGQEDIEVAITLNLLGTLATNRCKFDEAKQILNQAMNICESKYESNVLLIADIAYSLGSVCFVEPNRKLEVAEAYFARSLELTESKVGDMDVAYARILTRLGSLNIEKDTYADAEAFFKAALKIYEARLGIDHSRVSQILRHMISLYEVQENYKMAEQCCIRALAITKKIYGNSHNLVSATQIRQALLYNSMNRKQDCLNLLNEVKVTREKEFGPDHKQVKHIIDLIKEIDKPIVPKAPPPPPPSSSSPSASSLLMKSITSLPIVNGQAVLSVPKPPVSRGPNGIPIPPPPPPTIKLYTNMVSLQSVMKQNVGRIPVAQPTSFNSPVQPPSPRTQQAIQQGQQQRQQVQQQQQQVQQQMSQKVSSLQQQPQQQQQQQPSQGYGNRQNTPLFQQPIFQQQFQQNRIQQPQQQPQQQAYVGDMLAQFDQQKLKRVQNANDRSGASQIVENLIGKKKCSKPVSLVNKGYMEESNQIDMGALFD.

Disordered regions lie at residues Arg-84 to Gln-109 and Ser-326 to Gln-359. Over residues Thr-89–Thr-105 the composition is skewed to low complexity. Acidic residues predominate over residues Asp-333–Phe-352. TPR repeat units lie at residues Ser-1110–Asn-1143, Ala-1150–Glu-1183, Ala-1192–Lys-1225, Ala-1234–Lys-1269, Ala-1278–Arg-1311, and Ser-1320–Ile-1353. 2 disordered regions span residues Val-1500 to Arg-1528 and Gln-1544 to Thr-1571. A coiled-coil region spans residues Arg-1516–Ser-1547. 2 stretches are compositionally biased toward low complexity: residues Gln-1518–Arg-1528 and Gln-1544–Gln-1563.

The polypeptide is TPR repeat-containing protein DDB_G0287407 (Dictyostelium discoideum (Social amoeba)).